Consider the following 401-residue polypeptide: Argininosuccinate synthase (401 aa).

8–16 is an ATP binding site; it reads AYSGGLDTS. Y87 contacts L-citrulline. G117 provides a ligand contact to ATP. Positions 119, 123, and 124 each coordinate L-aspartate. Residue N123 coordinates L-citrulline. Residues R127, S175, E259, and Y271 each coordinate L-citrulline.

The protein belongs to the argininosuccinate synthase family. Type 1 subfamily. Homotetramer.

The protein resides in the cytoplasm. It catalyses the reaction L-citrulline + L-aspartate + ATP = 2-(N(omega)-L-arginino)succinate + AMP + diphosphate + H(+). Its pathway is amino-acid biosynthesis; L-arginine biosynthesis; L-arginine from L-ornithine and carbamoyl phosphate: step 2/3. The polypeptide is Argininosuccinate synthase (Paenarthrobacter aurescens (strain TC1)).